Reading from the N-terminus, the 257-residue chain is Diphthine synthase (257 aa).

S-adenosyl-L-methionine-binding positions include leucine 9, aspartate 85, valine 88, 113 to 114 (SI), leucine 164, alanine 207, and histidine 232.

Belongs to the diphthine synthase family. As to quaternary structure, homodimer.

It carries out the reaction 2-[(3S)-amino-3-carboxypropyl]-L-histidyl-[translation elongation factor 2] + 3 S-adenosyl-L-methionine = diphthine-[translation elongation factor 2] + 3 S-adenosyl-L-homocysteine + 3 H(+). It participates in protein modification; peptidyl-diphthamide biosynthesis. Functionally, S-adenosyl-L-methionine-dependent methyltransferase that catalyzes the trimethylation of the amino group of the modified target histidine residue in translation elongation factor 2 (EF-2), to form an intermediate called diphthine. The three successive methylation reactions represent the second step of diphthamide biosynthesis. This Methanococcus aeolicus (strain ATCC BAA-1280 / DSM 17508 / OCM 812 / Nankai-3) protein is Diphthine synthase.